The sequence spans 123 residues: UPF0102 protein Maqu_2464 (123 aa).

It belongs to the UPF0102 family.

This chain is UPF0102 protein Maqu_2464, found in Marinobacter nauticus (strain ATCC 700491 / DSM 11845 / VT8) (Marinobacter aquaeolei).